The primary structure comprises 649 residues: tRNA-guanine(15) transglycosylase (649 aa).

The active-site Nucleophile is aspartate 88. Substrate is bound by residues aspartate 123 and alanine 194. Positions 280, 282, and 285 each coordinate Zn(2+). The PUA domain maps to 573–648 (KYRIVIDSSV…VAVTLRGGLK (76 aa)).

Belongs to the archaeosine tRNA-ribosyltransferase family. It depends on Zn(2+) as a cofactor.

The catalysed reaction is guanosine(15) in tRNA + 7-cyano-7-deazaguanine = 7-cyano-7-carbaguanosine(15) in tRNA + guanine. Its pathway is tRNA modification; archaeosine-tRNA biosynthesis. Exchanges the guanine residue with 7-cyano-7-deazaguanine (preQ0) at position 15 in the dihydrouridine loop (D-loop) of archaeal tRNAs. In Methanococcus maripaludis (strain C7 / ATCC BAA-1331), this protein is tRNA-guanine(15) transglycosylase.